The sequence spans 375 residues: WAT1-related protein At1g70260 (375 aa).

10 consecutive transmembrane segments (helical) span residues 10-30 (LVPF…TIMA), 41-61 (FVFV…FSFL), 72-92 (IFSW…IFMF), 106-126 (IVVC…SIIL), 143-163 (MGTI…GPFI), 191-211 (WFLG…FNVV), 225-245 (VASF…LFME), 259-278 (LYLI…SVHV), 289-309 (VPLF…SFFV), and 312-332 (LHYG…TVSW). The EamA domain maps to 25–134 (ALTIMAKTAL…ILGRSKLDWR (110 aa)). Positions 337-356 (ESEEKQSSNEERKSIKTIHH) are disordered.

Belongs to the drug/metabolite transporter (DMT) superfamily. Plant drug/metabolite exporter (P-DME) (TC 2.A.7.4) family.

The protein resides in the membrane. This chain is WAT1-related protein At1g70260, found in Arabidopsis thaliana (Mouse-ear cress).